The chain runs to 322 residues: Ribosome biogenesis protein RLP7 (322 aa).

Positions 1–16 are enriched in polar residues; sequence MSSTQDSKAQTLNSNP. A disordered region spans residues 1-52; the sequence is MSSTQDSKAQTLNSNPEILLRKRRNADRTRIERQELAKKKREEQIKKKRSNK. At serine 2 the chain carries N-acetylserine. Serine 14 is subject to Phosphoserine. Basic and acidic residues predominate over residues 26-45; it reads ADRTRIERQELAKKKREEQI. Position 120 is a phosphothreonine (threonine 120). At serine 278 the chain carries Phosphoserine.

It belongs to the universal ribosomal protein uL30 family.

The protein resides in the nucleus. Its subcellular location is the nucleolus. Functionally, involved in the biogenesis of the 60S ribosomal subunit. May act as a specificity factor that binds precursor rRNAs and tethers the enzymes that carry out the early 5' to 3' exonucleolytic reactions that generate the mature rRNAs. This chain is Ribosome biogenesis protein RLP7 (RLP7), found in Saccharomyces cerevisiae (strain ATCC 204508 / S288c) (Baker's yeast).